A 273-amino-acid polypeptide reads, in one-letter code: 4-hydroxy-tetrahydrodipicolinate reductase (273 aa).

NAD(+) contacts are provided by residues Gly12–Met17 and Glu38. Arg39 contributes to the NADP(+) binding site. NAD(+)-binding positions include Gly102–Thr104 and Ala126–Phe129. The Proton donor/acceptor role is filled by His159. (S)-2,3,4,5-tetrahydrodipicolinate is bound at residue His160. The active-site Proton donor is Lys163. A (S)-2,3,4,5-tetrahydrodipicolinate-binding site is contributed by Gly169 to Thr170.

Belongs to the DapB family. Homotetramer.

The protein localises to the cytoplasm. The catalysed reaction is (S)-2,3,4,5-tetrahydrodipicolinate + NAD(+) + H2O = (2S,4S)-4-hydroxy-2,3,4,5-tetrahydrodipicolinate + NADH + H(+). The enzyme catalyses (S)-2,3,4,5-tetrahydrodipicolinate + NADP(+) + H2O = (2S,4S)-4-hydroxy-2,3,4,5-tetrahydrodipicolinate + NADPH + H(+). The protein operates within amino-acid biosynthesis; L-lysine biosynthesis via DAP pathway; (S)-tetrahydrodipicolinate from L-aspartate: step 4/4. Functionally, catalyzes the conversion of 4-hydroxy-tetrahydrodipicolinate (HTPA) to tetrahydrodipicolinate. The sequence is that of 4-hydroxy-tetrahydrodipicolinate reductase from Salmonella schwarzengrund (strain CVM19633).